The chain runs to 541 residues: Membrane protein insertase YidC (541 aa).

A run of 5 helical transmembrane segments spans residues 7–27, 345–365, 415–435, 453–473, and 492–512; these read LLFM…QVDY, LVQN…AVLY, LGGC…YWTF, LSAQ…MFLL, and FMPL…VLYW.

It belongs to the OXA1/ALB3/YidC family. Type 1 subfamily. As to quaternary structure, interacts with the Sec translocase complex via SecD. Specifically interacts with transmembrane segments of nascent integral membrane proteins during membrane integration.

Its subcellular location is the cell inner membrane. In terms of biological role, required for the insertion and/or proper folding and/or complex formation of integral membrane proteins into the membrane. Involved in integration of membrane proteins that insert both dependently and independently of the Sec translocase complex, as well as at least some lipoproteins. Aids folding of multispanning membrane proteins. This is Membrane protein insertase YidC from Histophilus somni (strain 2336) (Haemophilus somnus).